Reading from the N-terminus, the 307-residue chain is NAD kinase (307 aa).

Asp-78 serves as the catalytic Proton acceptor. Residues 78–79 (DG), His-83, 154–155 (NE), Arg-165, Arg-182, Asp-184, and Gln-255 contribute to the NAD(+) site.

It belongs to the NAD kinase family. Requires a divalent metal cation as cofactor.

The protein resides in the cytoplasm. It catalyses the reaction NAD(+) + ATP = ADP + NADP(+) + H(+). In terms of biological role, involved in the regulation of the intracellular balance of NAD and NADP, and is a key enzyme in the biosynthesis of NADP. Catalyzes specifically the phosphorylation on 2'-hydroxyl of the adenosine moiety of NAD to yield NADP. This Halorhodospira halophila (strain DSM 244 / SL1) (Ectothiorhodospira halophila (strain DSM 244 / SL1)) protein is NAD kinase.